Reading from the N-terminus, the 1841-residue chain is MRNSSKGQDPNFSYDSILSTPTPSARRTIGPRAPKSKTTYHKPPSSIESVSTLIQPNKSQSVTSPYVKQFTFSSKEYNSHNKHALQNSQLPLPKTPEKSTVHRPKANKVEVTDLPSSSSVEHLHTSKHLKGPRLPKNIIKSSEDVQIAPVTPPVHSRSFDPLPKPPVPSVPVSKTKRRTKHKLAPVVEVPEITNEVSPKFTSTNDEQVYRLRSIRAGSPNSVCSFQFEIPSTRPPSLDQLIHLFNDFLRHPVFDFDENAIEMLQSCTPDEKWCFIRSNFAGFDDPSFQIPELAAVHRPVSWFVIQLWNKTISNLQLITLSSLLSTQSDRWISLFLELQGLRALHNLLTYFNSSAVVQPQQAEVPRCMLTLLKKKPTLVTSNSYIFQAITVTLISPNLLPRKVAADLLTWVLSLKEPLVVSILETGFKEINAEYEKEVPLFFGWIKSFKDIILEKELARTPPSSPARNSASSSPSNIAFLEYCTSTMEFINQLIVACEELEQGFDLDILDSLRESGIHEVIQLLRNFPDQQLEKQLNIYESEEERRTISQTTHEDVDSFMSNESSILSSFNEFASNEVGRLLESTIQNILLAKGTEKQKVKLIKVFNSLLQRILLNSKVSNESFEDSLQASLNMLTERFYSDDTARNALKEAKASRAMAEKMVIERDAMAAQVNLGAEDLIAKLNKEVEDQKDVILSQKRTNETLKTEIDALQKSHVTQIQRSEVELRELYLLINSDSFQGSTNSKERIIEYLLDKLDLRKKEIAAESTLWSNDGIDDKLRDLREQMSRQSSQPSTVSTILQIPDKKFHRPFPRHLHRYVGRSASESLTSEKDESIKSMKGIDDFANLEIPGKGIESNVVIKDISNQTHEINSVENKAETVSNNSKITNFDIPNDATSLPTIITHPTPPPPPPLPVKTSLNTFSHPDSVNIVANDTSVAGVMPAFPPPPPPPPPLVSAAGGKFVSPAVSNNISKDDLHKTTGLTRRPTRRLKQMHWEKLNSGLEFTFWTGPSDEANKILETLHTSGVLDELDESFAMKEAKTLVKKTCARTDYMSSELQKLFGIHFHKLSHKNPNEIIRMILHCDDSMNECVEFLSSDKVLNQPKLKADLEPYRIDWANGGDLVNSEKDASELSRWDYLYVRLIVDLGGYWNQRMNALKVKNIIETNYENLVRQTKLIGRAALELRDSKVFKGLLYLILYLGNYMNDYVRQAKGFAIGSLQRLPLIKNANNTKSLLHILDITIRKHFPQFDNFSPELSTVTEAAKLNIEAIEQECSELIRGCQNLQIDCDSGALSDPTVFHPDDKILSVILPWLMEGTKKMDFLKEHLRTMNTTLNNAMRYFGEQPNDPNSKNLFFKRVDSFIIDYSKARSDNLKSEEEEASQHRRLNLVNNHKEHVLERAMSENNKMDNEAMDGFLDKLRNVKLESHHKPRNRSAITMGKEHLIEAPNTSTKSSPAKNELFVPKRSSVKSDLAKVRPRYPKGSESTDGLSDALNITPTKKGEVSSKAKKGYNYEKRRSGRQVSDSYVLNKNSKNKSNKGRSASYTFSDPSSLEDSNRQKPFNGEKFRRFSSKSRRGSQNRDSKKTGKARKDKGINNNQTSPQNKPSKESLKSDTISNEKKVFPQKASKVNLLTPTISNGTRASKHANEKENTFPRGVENNLVAPMIPNNTELNEDTSAVSRNLENATNDLKETFPTTTTISTARAKPGNNDINTILRRNNSRGRRRMLQQMSPLKSNKFSGTNDLNFQQATKPDGSNKSSYMERLEKLKQNSERHLQSVGGKKVYSSEETPVNKILVSPSVSILDHNRILSQSTPIKSPQRAQEMLAGLLSGKLAPKENEK.

Polar residues-rich tracts occupy residues 1 to 25 and 46 to 63; these read MRNS…TPSA and SIES…QSVT. Disordered stretches follow at residues 1-63, 78-134, and 152-181; these read MRNS…QSVT, NSHN…GPRL, and PPVH…RTKH. The 389-residue stretch at 232–620 folds into the GBD/FH3 domain; that stretch reads TRPPSLDQLI…RILLNSKVSN (389 aa). Residues 674 to 715 adopt a coiled-coil conformation; the sequence is LGAEDLIAKLNKEVEDQKDVILSQKRTNETLKTEIDALQKSH. The region spanning 740 to 972 is the FH1 domain; the sequence is GSTNSKERII…VSPAVSNNIS (233 aa). The 412-residue stretch at 980–1391 folds into the FH2 domain; the sequence is TGLTRRPTRR…QHRRLNLVNN (412 aa). The stretch at 1260-1290 forms a coiled coil; the sequence is TEAAKLNIEAIEQECSELIRGCQNLQIDCDS. Disordered stretches follow at residues 1445-1661, 1696-1715, and 1735-1758; these read EAPN…ENNL, TTTT…INTI, and KSNK…GSNK. Composition is skewed to polar residues over residues 1447–1456 and 1483–1497; these read PNTSTKSSPA and SEST…NITP. Positions 1499 to 1516 are enriched in basic and acidic residues; that stretch reads KKGEVSSKAKKGYNYEKR. Residues 1539–1553 are compositionally biased toward polar residues; that stretch reads GRSASYTFSDPSSLE. Residue S1541 is modified to Phosphoserine. Residue Y1544 is modified to Phosphotyrosine. Residues 1554 to 1567 show a composition bias toward basic and acidic residues; the sequence is DSNRQKPFNGEKFR. The span at 1568–1577 shows a compositional bias: basic residues; sequence RFSSKSRRGS. Positions 1594–1604 are enriched in polar residues; the sequence is INNNQTSPQNK. Over residues 1605–1621 the composition is skewed to basic and acidic residues; the sequence is PSKESLKSDTISNEKKV. Residues 1630–1641 are compositionally biased toward polar residues; sequence NLLTPTISNGTR.

Belongs to the formin homology family. BNI1 subfamily. Interacts with profilin and actin at the FH1 and FH2 domains respectively.

The protein localises to the nucleus. In terms of biological role, plays a role in the cell cycle. Involved in cytokinesis. Component of the cell division ring. In the absence of profilin, caps the barbed end of actin filaments, thus preventing subunit addition and dissociation. In the presence of profilin, nucleates actin filaments that grow rapidly from their barbed ends. This chain is Cell division control protein 12 (cdc12), found in Schizosaccharomyces pombe (strain 972 / ATCC 24843) (Fission yeast).